A 278-amino-acid chain; its full sequence is Large ribosomal subunit protein uL2 (278 aa).

Positions 202 to 278 (ANINDGKAGR…IMRSRHQRKK (77 aa)) are disordered.

This sequence belongs to the universal ribosomal protein uL2 family. As to quaternary structure, part of the 50S ribosomal subunit. Forms a bridge to the 30S subunit in the 70S ribosome.

Functionally, one of the primary rRNA binding proteins. Required for association of the 30S and 50S subunits to form the 70S ribosome, for tRNA binding and peptide bond formation. It has been suggested to have peptidyltransferase activity; this is somewhat controversial. Makes several contacts with the 16S rRNA in the 70S ribosome. This chain is Large ribosomal subunit protein uL2, found in Rhizobium johnstonii (strain DSM 114642 / LMG 32736 / 3841) (Rhizobium leguminosarum bv. viciae).